A 777-amino-acid polypeptide reads, in one-letter code: Dynamin-like protein ARC5 (777 aa).

The Dynamin-type G domain occupies 45 to 343; sequence PFEAPAVLVV…LWKRYKESVP (299 aa). A G1 motif region spans residues 55 to 62; that stretch reads GQQTDGKS. 55–62 provides a ligand contact to GTP; it reads GQQTDGKS. Residues 81–83 are G2 motif; the sequence is KTR. Residues 160–163 form a G3 motif region; it reads DTPG. Residues 160 to 164 and 231 to 234 each bind GTP; these read DTPGL and TKLD. A G4 motif region spans residues 231-234; that stretch reads TKLD. The G5 motif stretch occupies residues 265–268; sequence SPFF. Coiled-coil stretches lie at residues 300-320 and 728-765; these read EDIA…EKSR and NLRQ…NSHE.

It belongs to the TRAFAC class dynamin-like GTPase superfamily. Dynamin/Fzo/YdjA family. As to quaternary structure, forms a homodimer and heterodimers with DRP3A and DRP3B on peroxisomes. Also interacts with FIS1A (but not FIS1B) and PEX11 proteins (PEX11A, PEX11B, PEX11C, PEX11D and PEX11E) on peroxisomes. Interacts with PDV1 and PDV2. In terms of processing, stabilized at the plastid outer envelope membranes (OEMs) in the constriction site when in complex with GTP, but destabilized after conversion of GTP into GDP leading to turnover with a cytosolic pool.

The protein localises to the cytoplasm. It localises to the plastid. The protein resides in the chloroplast outer membrane. Its subcellular location is the peroxisome. It is found in the cytosol. It carries out the reaction GTP + H2O = GDP + phosphate + H(+). GTPase activity is repressed by PDV2 thus increasing stability at the plastid outer envelope membranes (OEMs) periphery. Functionally, mechanochemical GTPase component of both plastid and peroxisome division machinery. Required for the last steps of plastid division specifically in mesophyll-cell, when the narrow isthmus breaks, facilitating the separation of the daughter plastids. Necessary for peroxisome activities. Seems to influence stromule (stroma-filled tubular extensions of the plastid envelope membrane) length and frequency. The sequence is that of Dynamin-like protein ARC5 from Arabidopsis thaliana (Mouse-ear cress).